Consider the following 326-residue polypeptide: Centriolar satellite-associated tubulin polyglutamylase complex regulator 1 (326 aa).

The interval M1–D111 is required for interaction with PCM1. The interval M1 to E225 is required for interaction with TPGS1, LRRC49, and TTLL1.

Belongs to the CSTPP1 family. As to quaternary structure, interacts with PCM1. Interacts with TTLL1, TPGS1, TPGS2 and LRRC49; the interactions link CSTPP1 to the complex TPGC. Binds to alpha-tubulin.

The protein localises to the cytoplasm. It localises to the cytoskeleton. The protein resides in the microtubule organizing center. It is found in the centrosome. Its subcellular location is the centriolar satellite. In terms of biological role, regulator of the tubulin polyglutamylase complex (TPGC) that controls cytoskeletal organization, nuclear shape, and cilium disassembly by balancing microtubule and actin assembly. Regulates the assembly and stability of the TPGC and thereby modulates polyglutamylation of the microtubule, which antagonizes MAP4 binding. The sequence is that of Centriolar satellite-associated tubulin polyglutamylase complex regulator 1 (CSTPP1) from Bos taurus (Bovine).